A 127-amino-acid polypeptide reads, in one-letter code: Aspartate 1-decarboxylase (127 aa).

Residue serine 25 is the Schiff-base intermediate with substrate; via pyruvic acid of the active site. Serine 25 is modified (pyruvic acid (Ser)). Threonine 57 is a substrate binding site. The Proton donor role is filled by tyrosine 58. 73-75 (GAA) lines the substrate pocket.

It belongs to the PanD family. As to quaternary structure, heterooctamer of four alpha and four beta subunits. Pyruvate serves as cofactor. Post-translationally, is synthesized initially as an inactive proenzyme, which is activated by self-cleavage at a specific serine bond to produce a beta-subunit with a hydroxyl group at its C-terminus and an alpha-subunit with a pyruvoyl group at its N-terminus.

It is found in the cytoplasm. The catalysed reaction is L-aspartate + H(+) = beta-alanine + CO2. Its pathway is cofactor biosynthesis; (R)-pantothenate biosynthesis; beta-alanine from L-aspartate: step 1/1. Functionally, catalyzes the pyruvoyl-dependent decarboxylation of aspartate to produce beta-alanine. This chain is Aspartate 1-decarboxylase, found in Trichormus variabilis (strain ATCC 29413 / PCC 7937) (Anabaena variabilis).